We begin with the raw amino-acid sequence, 1280 residues long: Dynactin subunit 1 (1280 aa).

The interval 1 to 26 (MAQSKRHMYNRTPSGSRMSTEASARP) is disordered. Over residues 11–22 (RTPSGSRMSTEA) the composition is skewed to polar residues. The region spanning 48–90 (GATLFATGKWVGVILDEAKGKNDGTVQGRKYFTCDEGHGIFVR) is the CAP-Gly domain. The interval 99–223 (DGADTTSPET…SKEEEGLRDQ (125 aa)) is disordered. The span at 102–114 (DTTSPETPDSSAS) shows a compositional bias: polar residues. Phosphothreonine is present on residues threonine 108, threonine 145, threonine 146, and threonine 147. Residues 129 to 152 (SKLRGLKPKKAPTARKTTTRRPKP) show a composition bias toward basic residues. The span at 161–205 (AGPSSSLGPSGSASAGELSSSEPSTPAQTPLAAPIIPTPALTSPG) shows a compositional bias: low complexity. Phosphoserine; by PLK1 is present on serine 179. Serine 212 is subject to Phosphoserine; by CDK1. A compositionally biased stretch (basic and acidic residues) spans 214–223 (SKEEEGLRDQ). 2 coiled-coil regions span residues 214–513 (SKEE…ADYQ) and 942–1048 (LKLE…EGLR). The tract at residues 910-1280 (EYDAERPPSK…LHQLHGRLIS (371 aa)) is interaction with HPS6. The tract at residues 1064 to 1089 (GEEQQRGGTPGQAPGALPGPGPVKDS) is disordered. The stretch at 1184–1213 (SAQLMEQVAQLKSLSDTIEKLKDEVLKETV) forms a coiled coil.

This sequence belongs to the dynactin 150 kDa subunit family. Monomer and homodimer. Subunit of dynactin, a multiprotein complex part of a tripartite complex with dynein and a adapter, such as BICDL1, BICD2 or HOOK3. The dynactin complex is built around ACTR1A/ACTB filament and consists of an actin-related filament composed of a shoulder domain, a pointed end and a barbed end. Its length is defined by its flexible shoulder domain. The soulder is composed of 2 DCTN1 subunits, 4 DCTN2 and 2 DCTN3. DCTN1/p150(glued) binds directly to microtubules and to cytoplasmic dynein. The 4 DCNT2 (via N-terminus) bind the ACTR1A filament and act as molecular rulers to determine the length. The pointed end is important for binding dynein-dynactin cargo adapters. Consists of 4 subunits: ACTR10, DCNT4, DCTN5 and DCTN6. The barbed end is composed of a CAPZA1:CAPZB heterodimers, which binds ACTR1A/ACTB filament and dynactin and stabilizes dynactin. Interacts with the C-terminus of MAPRE1, MAPRE2 and MAPRE3. Interacts (via C-terminus) with SNX6. Interacts with CLN3, DYNAP, ECPAS and FBXL5. Interacts with MISP; this interaction regulates its distribution at the cell cortex. Interacts with CEP131. Interacts with CEP126. Interacts with CLIP1. Interacts with dynein intermediate chain and dynein heavy chain. Interacts with PLK1 (via POLO-box domain). Interacts with TBCB. Binds preferentially to tyrosinated microtubules than to detyrosinated microtubules. Interacts with PARD6A. Interacts with HPS6. Interacts with KIF3A. Interacts with BICD2. Interacts with DST (isoform 9). Interacts with DST (isoform 1). Identified in a complex with MREG and RILP. Interacts with BCCIP (isoform 2/alpha). Interacts with DCDC1. Interacts with AKNA. Interacts with DYNC1I2. Interacts with RUFY3 and RUFY4. Ubiquitinated by a SCF complex containing FBXL5, leading to its degradation by the proteasome. Post-translationally, phosphorylation by SLK at Thr-145, Thr-146 and Thr-147 targets DCTN1 to the centrosome. It is uncertain if SLK phosphorylates all three threonines or one or two of them. PLK1-mediated phosphorylation at Ser-179 is essential for its localization in the nuclear envelope and promotes its dissociation from microtubules during early mitosis and positively regulates nuclear envelope breakdown during prophase. As to expression, ubiquitous with a high level expression observed in the brain (at protein level).

It is found in the cytoplasm. The protein localises to the cytoskeleton. The protein resides in the microtubule organizing center. Its subcellular location is the centrosome. It localises to the centriole. It is found in the spindle. The protein localises to the nucleus envelope. The protein resides in the cell cortex. In terms of biological role, part of the dynactin complex that activates the molecular motor dynein for ultra-processive transport along microtubules. Plays a key role in dynein-mediated retrograde transport of vesicles and organelles along microtubules by recruiting and tethering dynein to microtubules. Binds to both dynein and microtubules providing a link between specific cargos, microtubules and dynein. Essential for targeting dynein to microtubule plus ends, recruiting dynein to membranous cargos and enhancing dynein processivity (the ability to move along a microtubule for a long distance without falling off the track). Can also act as a brake to slow the dynein motor during motility along the microtubule. Can regulate microtubule stability by promoting microtubule formation, nucleation and polymerization and by inhibiting microtubule catastrophe in neurons. Inhibits microtubule catastrophe by binding both to microtubules and to tubulin, leading to enhanced microtubule stability along the axon. Plays a role in metaphase spindle orientation. Plays a role in centriole cohesion and subdistal appendage organization and function. Its recruitment to the centriole in a KIF3A-dependent manner is essential for the maintenance of centriole cohesion and the formation of subdistal appendage. Also required for microtubule anchoring at the mother centriole. Plays a role in primary cilia formation. This is Dynactin subunit 1 (Dctn1) from Rattus norvegicus (Rat).